Consider the following 471-residue polypeptide: Putative multidrug resistance protein MdtD (471 aa).

Topologically, residues Met1 to Gln11 are periplasmic. The helical transmembrane segment at Leu12–Ala32 threads the bilayer. The Cytoplasmic portion of the chain corresponds to Leu33–His48. The chain crosses the membrane as a helical span at residues Met49–Ala69. Topologically, residues Asp70–Asn76 are periplasmic. Residues Ile77–Thr97 traverse the membrane as a helical segment. The Cytoplasmic portion of the chain corresponds to Leu98–Leu101. The helical transmembrane segment at Leu102–Met124 threads the bilayer. At Lys125–Thr137 the chain is on the periplasmic side. The chain crosses the membrane as a helical span at residues Phe138 to Val158. Over Glu159–His164 the chain is Cytoplasmic. The chain crosses the membrane as a helical span at residues Trp165–Met185. At Pro186 to Asp196 the chain is on the periplasmic side. Residues Leu197–Ser217 traverse the membrane as a helical segment. Residues Lys218–Pro224 are Cytoplasmic-facing. A helical membrane pass occupies residues Leu225–Ala245. Residues Arg246–Thr262 lie on the Periplasmic side of the membrane. The chain crosses the membrane as a helical span at residues Phe263 to Met283. Residues Thr284–Pro285 are Cytoplasmic-facing. Residues Val286 to Met306 form a helical membrane-spanning segment. At Val307–Thr341 the chain is on the periplasmic side. A helical membrane pass occupies residues Leu342 to Leu362. At Gln363–Ser395 the chain is on the cytoplasmic side. The chain crosses the membrane as a helical span at residues Met396–Phe416. Over Gly417–Thr430 the chain is Periplasmic. Residues Val431–Ala451 traverse the membrane as a helical segment. The Cytoplasmic portion of the chain corresponds to Arg452–Gln471.

Belongs to the major facilitator superfamily. TCR/Tet family.

Its subcellular location is the cell inner membrane. The protein is Putative multidrug resistance protein MdtD of Escherichia coli O157:H7.